The sequence spans 745 residues: 5-methyltetrahydropteroyltriglutamate--homocysteine methyltransferase (745 aa).

5-methyltetrahydropteroyltri-L-glutamate is bound by residues 17–20 (RELK) and K111. L-homocysteine is bound by residues 421–423 (IGS) and E474. Residues 421-423 (IGS) and E474 contribute to the L-methionine site. 5-methyltetrahydropteroyltri-L-glutamate-binding positions include 505–506 (RC) and W551. Residue D589 participates in L-homocysteine binding. L-methionine is bound at residue D589. A 5-methyltetrahydropteroyltri-L-glutamate-binding site is contributed by E595. Residues H631, C633, and E655 each coordinate Zn(2+). Residue H684 is the Proton donor of the active site. C716 provides a ligand contact to Zn(2+).

This sequence belongs to the vitamin-B12 independent methionine synthase family. Zn(2+) serves as cofactor.

The catalysed reaction is 5-methyltetrahydropteroyltri-L-glutamate + L-homocysteine = tetrahydropteroyltri-L-glutamate + L-methionine. It functions in the pathway amino-acid biosynthesis; L-methionine biosynthesis via de novo pathway; L-methionine from L-homocysteine (MetE route): step 1/1. In terms of biological role, catalyzes the transfer of a methyl group from 5-methyltetrahydrofolate to homocysteine resulting in methionine formation. The protein is 5-methyltetrahydropteroyltriglutamate--homocysteine methyltransferase of Thermodesulfovibrio yellowstonii (strain ATCC 51303 / DSM 11347 / YP87).